The sequence spans 298 residues: Arginine/serine-rich protein 1 (298 aa).

The segment at 1 to 135 (MSSAAMSKYV…SRSRSRGRSQ (135 aa)) is disordered. S17 bears the Phosphoserine mark. Low complexity predominate over residues 23–36 (SPSTSGSGRSSRLS). Residues 60–105 (SRSHSRPRRSRRSRSRSRRRHQRKYRRYSRSYSRSRSRSRSHRYHR) are compositionally biased toward basic residues. S118 and S120 each carry phosphoserine. Positions 124–135 (SRSRSRSRGRSQ) are enriched in basic residues. An Omega-N-methylarginine modification is found at R145. Disordered regions lie at residues 161-181 (RPRWRERSRTRSRSRSRTPFR) and 218-298 (ASQG…WIPV). The span at 219–228 (SQGTAVSSSG) shows a compositional bias: polar residues. Residues 230–246 (KVEHSEKQTEDATKNTS) show a composition bias toward basic and acidic residues. Polar residues predominate over residues 247–271 (EKSSTQRNIAFSSNNSVAKPLQKTT). The segment covering 274–289 (AVEEKSSGSPKIDKKK) has biased composition (basic and acidic residues). At S282 the chain carries Phosphoserine.

This sequence belongs to the RSRP family. In terms of processing, phosphorylated. Phosphorylation at Ser-118 and Ser-120 mediates the interaction with spliceosome proteins.

It localises to the nucleus. In terms of biological role, probably acts as a spliceosomal factor that contributes to spliceosome assembly and regulates the isoform switching of proteins such as PARP6. The chain is Arginine/serine-rich protein 1 (Rsrp1) from Mus musculus (Mouse).